The sequence spans 484 residues: tRNA sulfurtransferase (484 aa).

The THUMP domain maps to E63–R167. ATP is bound by residues L185–M186, K267, G289, and Q298. C346 and C458 are disulfide-bonded. The Rhodanese domain occupies I406–P484. C458 serves as the catalytic Cysteine persulfide intermediate.

Belongs to the ThiI family.

It localises to the cytoplasm. It carries out the reaction [ThiI sulfur-carrier protein]-S-sulfanyl-L-cysteine + a uridine in tRNA + 2 reduced [2Fe-2S]-[ferredoxin] + ATP + H(+) = [ThiI sulfur-carrier protein]-L-cysteine + a 4-thiouridine in tRNA + 2 oxidized [2Fe-2S]-[ferredoxin] + AMP + diphosphate. The enzyme catalyses [ThiS sulfur-carrier protein]-C-terminal Gly-Gly-AMP + S-sulfanyl-L-cysteinyl-[cysteine desulfurase] + AH2 = [ThiS sulfur-carrier protein]-C-terminal-Gly-aminoethanethioate + L-cysteinyl-[cysteine desulfurase] + A + AMP + 2 H(+). The protein operates within cofactor biosynthesis; thiamine diphosphate biosynthesis. Functionally, catalyzes the ATP-dependent transfer of a sulfur to tRNA to produce 4-thiouridine in position 8 of tRNAs, which functions as a near-UV photosensor. Also catalyzes the transfer of sulfur to the sulfur carrier protein ThiS, forming ThiS-thiocarboxylate. This is a step in the synthesis of thiazole, in the thiamine biosynthesis pathway. The sulfur is donated as persulfide by IscS. This is tRNA sulfurtransferase from Colwellia psychrerythraea (strain 34H / ATCC BAA-681) (Vibrio psychroerythus).